An 88-amino-acid polypeptide reads, in one-letter code: Exodeoxyribonuclease 7 small subunit (88 aa).

A disordered region spans residues 68-88; that stretch reads SDPMHPDDGEPFDPSLVSTSQ.

Belongs to the XseB family. Heterooligomer composed of large and small subunits.

Its subcellular location is the cytoplasm. It catalyses the reaction Exonucleolytic cleavage in either 5'- to 3'- or 3'- to 5'-direction to yield nucleoside 5'-phosphates.. In terms of biological role, bidirectionally degrades single-stranded DNA into large acid-insoluble oligonucleotides, which are then degraded further into small acid-soluble oligonucleotides. This Xylella fastidiosa (strain 9a5c) protein is Exodeoxyribonuclease 7 small subunit.